Here is a 253-residue protein sequence, read N- to C-terminus: E3 ubiquitin-protein ligase MARCHF3 (253 aa).

The segment at Ser63 to Glu123 adopts an RING-CH-type zinc-finger fold. Positions 71, 74, 87, 89, 97, 100, 113, and 116 each coordinate Zn(2+). The next 2 membrane-spanning stretches (helical) occupy residues Leu145 to Leu165 and Ala182 to Val202. 2 positions are modified to phosphoserine: Ser237 and Ser243.

Interacts with MARCHF2 and STX6.

It localises to the cytoplasmic vesicle membrane. Its subcellular location is the early endosome membrane. The catalysed reaction is S-ubiquitinyl-[E2 ubiquitin-conjugating enzyme]-L-cysteine + [acceptor protein]-L-lysine = [E2 ubiquitin-conjugating enzyme]-L-cysteine + N(6)-ubiquitinyl-[acceptor protein]-L-lysine.. It participates in protein modification; protein ubiquitination. Its function is as follows. E3 ubiquitin-protein ligase which may be involved in endosomal trafficking. E3 ubiquitin ligases accept ubiquitin from an E2 ubiquitin-conjugating enzyme in the form of a thioester and then directly transfer the ubiquitin to targeted substrates. The polypeptide is E3 ubiquitin-protein ligase MARCHF3 (MARCHF3) (Bos taurus (Bovine)).